A 186-amino-acid polypeptide reads, in one-letter code: Elongation factor P (186 aa).

The protein belongs to the elongation factor P family.

Its subcellular location is the cytoplasm. It participates in protein biosynthesis; polypeptide chain elongation. In terms of biological role, involved in peptide bond synthesis. Stimulates efficient translation and peptide-bond synthesis on native or reconstituted 70S ribosomes in vitro. Probably functions indirectly by altering the affinity of the ribosome for aminoacyl-tRNA, thus increasing their reactivity as acceptors for peptidyl transferase. In Neisseria gonorrhoeae (strain ATCC 700825 / FA 1090), this protein is Elongation factor P.